Reading from the N-terminus, the 246-residue chain is Nodulation protein G (246 aa).

8–32 contributes to the NAD(+) binding site; it reads VTGAMGGLGTAICQALAKDGCIVAA. A substrate-binding site is contributed by Ser140. The active-site Proton acceptor is the Tyr153.

This sequence belongs to the short-chain dehydrogenases/reductases (SDR) family.

In terms of biological role, proposed to modify Nod factor fatty acyl chain. In Azospirillum brasilense, this protein is Nodulation protein G (nodG).